Consider the following 170-residue polypeptide: Large ribosomal subunit protein uL10 (170 aa).

This sequence belongs to the universal ribosomal protein uL10 family. As to quaternary structure, part of the ribosomal stalk of the 50S ribosomal subunit. The N-terminus interacts with L11 and the large rRNA to form the base of the stalk. The C-terminus forms an elongated spine to which L12 dimers bind in a sequential fashion forming a multimeric L10(L12)X complex.

Its function is as follows. Forms part of the ribosomal stalk, playing a central role in the interaction of the ribosome with GTP-bound translation factors. The polypeptide is Large ribosomal subunit protein uL10 (rplJ) (Chlamydia pneumoniae (Chlamydophila pneumoniae)).